Reading from the N-terminus, the 92-residue chain is Small ribosomal subunit protein uS19c (92 aa).

Belongs to the universal ribosomal protein uS19 family.

The protein localises to the plastid. In terms of biological role, protein S19 forms a complex with S13 that binds strongly to the 16S ribosomal RNA. This is Small ribosomal subunit protein uS19c from Cuscuta reflexa (Southern Asian dodder).